Consider the following 1877-residue polypeptide: Protein TIC 214 (1877 aa).

6 helical membrane-spanning segments follow: residues 18-38 (IINS…FSIG), 67-87 (FIAG…HLAL), 90-110 (PHTI…WNNH), 127-147 (LSIQ…HFIL), 175-195 (VGWL…LVWI), and 224-244 (IFSI…PSPI). The segment covering 249 to 258 (FKETSETEER) has biased composition (basic and acidic residues). A disordered region spans residues 249-308 (FKETSETEERGEGEEETDVEIETTFETKGTRQEQEGSTEEDPSLFSEEKEDPDKIDEREE). Composition is skewed to acidic residues over residues 259 to 271 (GEGE…EIET) and 284 to 298 (GSTE…EEKE). Residues 299 to 308 (DPDKIDEREE) are compositionally biased toward basic and acidic residues.

It belongs to the TIC214 family. As to quaternary structure, part of the Tic complex.

The protein localises to the plastid. Its subcellular location is the chloroplast inner membrane. Functionally, involved in protein precursor import into chloroplasts. May be part of an intermediate translocation complex acting as a protein-conducting channel at the inner envelope. The polypeptide is Protein TIC 214 (Eucalyptus globulus subsp. globulus (Tasmanian blue gum)).